A 123-amino-acid polypeptide reads, in one-letter code: Protein Wnt-7a (123 aa).

Ser1 carries the O-palmitoleoyl serine; by PORCN lipid modification. The segment at 33 to 61 (VEPVRASRNKRPTFLKIKKPLSYLKPMDT) is disordered linker. A disulfide bond links Cys89 and Cys104. Asn90 carries an N-linked (GlcNAc...) asparagine glycan.

This sequence belongs to the Wnt family. Post-translationally, palmitoleoylation is required for efficient binding to frizzled receptors. Depalmitoleoylation leads to Wnt signaling pathway inhibition.

The protein localises to the secreted. It is found in the extracellular space. It localises to the extracellular matrix. In terms of biological role, ligand for members of the frizzled family of seven transmembrane receptors that functions in the canonical Wnt/beta-catenin signaling pathway. Plays an important role in embryonic development, including dorsal versus ventral patterning during limb development, skeleton development and urogenital tract development. Required for central nervous system (CNS) angiogenesis and blood-brain barrier regulation. The chain is Protein Wnt-7a (WNT-7A) from Plethodon jordani (Red-cheeked salamander).